The following is a 211-amino-acid chain: Regulator of G-protein signaling 2 (211 aa).

Positions 32–66 (KMKRTLLKDWKTRLSYFLQNSSTPGKPKTGKKSKQ) are necessary for membrane association. The interval 79-116 (LWAEAFDELLASKYGLAAFRAFLKSEFCEENIEFWLAC) is necessary to inhibit protein synthesis. The 117-residue stretch at 83–199 (AFDELLASKY…LESEFYQDLC (117 aa)) folds into the RGS domain.

In terms of assembly, interacts with GNAQ. Does not interact with GNAI1 and GNAI3. Interacts with EIF2B5. Interacts with PRKG1 (isoform alpha). Phosphorylated by protein kinase C. Phosphorylation by PRKG1 leads to activation of RGS2 activity.

It is found in the cell membrane. Its subcellular location is the cytoplasm. The protein resides in the nucleus. It localises to the nucleolus. Functionally, regulates G protein-coupled receptor signaling cascades. Inhibits signal transduction by increasing the GTPase activity of G protein alpha subunits, thereby driving them into their inactive GDP-bound form. It is involved in the negative regulation of the angiotensin-activated signaling pathway. Plays a role in the regulation of blood pressure in response to signaling via G protein-coupled receptors and GNAQ. Plays a role in regulating the constriction and relaxation of vascular smooth muscle. Binds EIF2B5 and blocks its activity, thereby inhibiting the translation of mRNA into protein. The polypeptide is Regulator of G-protein signaling 2 (Rgs2) (Rattus norvegicus (Rat)).